A 409-amino-acid polypeptide reads, in one-letter code: POU domain, class 4, transcription factor 2 (409 aa).

Positions 26-93 are disordered; it reads YSALHSTSPG…SEAMRRACLP (68 aa). The segment covering 31–52 has biased composition (low complexity); the sequence is STSPGSSAPIAPSASSPSSSSN. The span at 53-69 shows a compositional bias: gly residues; sequence AGGGGGGGGGGGGGGGR. The required for transcriptional activation stretch occupies residues 91–237; it reads CLPTPPSNIF…MHQAALSMAH (147 aa). Residues 110 to 119 carry the POU-IV box motif; the sequence is RAEALAAVDI. Over residues 153 to 166 the composition is skewed to low complexity; it reads AASSSSVPISHPSA. Positions 153-188 are disordered; the sequence is AASSSSVPISHPSALAGTHHHHHHHHHHHHQPHQAL. Positions 170–184 are enriched in basic residues; the sequence is THHHHHHHHHHHHQP. Residues 171–185 carry the Nuclear speckle targeting signal motif; sequence HHHHHHHHHHHHQPH. The segment at 238–409 is required for DNA-binding and transcriptional repression; that stretch reads AHGLPSHMGC…QKRMKYSAGI (172 aa). A POU-specific domain is found at 250–327; it reads DVDADPRDLE…ILQAWLEEAE (78 aa). The segment at residues 345–404 is a DNA-binding region (homeobox); the sequence is KKRKRTSIAAPEKRSLEAYFAIQPRPSSEKIAAIAEKLDLKKNVVRVWFCNQRQKQKRMK.

Belongs to the POU transcription factor family. Class-4 subfamily. Interacts with POU4F1; this interaction inhibits both POU4F1 DNA-binding and transcriptional activities. Interacts (C-terminus) with ESR1 (via DNA-binding domain); this interaction increases the estrogen receptor ESR1 transcriptional activity in a DNA- and ligand 17-beta-estradiol-independent manner. Interacts (via C-terminus) with TP53 (via N-terminus). Interacts with DLX1 (via homeobox DNA-binding domain); this interaction suppresses DLX1-mediated transcriptional activity in postnatal retina enhancing retinal ganglion cell (RGC) differentiation. Interacts with DLX2 (via homeobox DNA-binding domain); this interaction enhances RGC differentiation. Interacts (via C-terminus) with ISL1 (via C-terminus). Interacts with ISL2. Interacts with LHX2. Expressed in the brain. Expressed in the ganglion cell layer of the retina.

The protein localises to the nucleus. It is found in the nucleus speckle. The protein resides in the cytoplasm. Tissue-specific DNA-binding transcription factor involved in the development and differentiation of target cells. Functions either as activator or repressor modulating the rate of target gene transcription through RNA polymerase II enzyme in a promoter-dependent manner. Binds to the consensus octamer motif 5'-AT[A/T]A[T/A]T[A/T]A-3' of promoter of target genes. Plays a fundamental role in the gene regulatory network essential for retinal ganglion cell (RGC) differentiation. Binds to an octamer site to form a ternary complex with ISL1; cooperates positively with ISL1 and ISL2 to potentiate transcriptional activation of RGC target genes being involved in RGC fate commitment in the developing retina and RGC axon formation and pathfinding. Inhibits DLX1 and DLX2 transcriptional activities preventing DLX1- and DLX2-mediated ability to promote amacrine cell fate specification. In cooperation with TP53 potentiates transcriptional activation of BAX promoter activity increasing neuronal cell apoptosis. Negatively regulates BAX promoter activity in the absence of TP53. Acts as a transcriptional coactivator via its interaction with the transcription factor ESR1 by enhancing its effect on estrogen response element (ERE)-containing promoter. Antagonizes the transcriptional stimulatory activity of POU4F1 by preventing its binding to an octamer motif. Involved in TNFSF11-mediated terminal osteoclast differentiation. In Homo sapiens (Human), this protein is POU domain, class 4, transcription factor 2.